A 425-amino-acid polypeptide reads, in one-letter code: Multifunctional CCA protein (425 aa).

2 residues coordinate ATP: G8 and R11. Positions 8 and 11 each coordinate CTP. D21 and D23 together coordinate Mg(2+). Residues R91, R141, and R144 each contribute to the ATP site. CTP contacts are provided by R91, R141, and R144. In terms of domain architecture, HD spans 230-331; sequence TGVHLMMVLD…VRLLERCDAI (102 aa).

The protein belongs to the tRNA nucleotidyltransferase/poly(A) polymerase family. Bacterial CCA-adding enzyme type 1 subfamily. Monomer. Can also form homodimers and oligomers. It depends on Mg(2+) as a cofactor. The cofactor is Ni(2+).

The enzyme catalyses a tRNA precursor + 2 CTP + ATP = a tRNA with a 3' CCA end + 3 diphosphate. It catalyses the reaction a tRNA with a 3' CCA end + 2 CTP + ATP = a tRNA with a 3' CCACCA end + 3 diphosphate. In terms of biological role, catalyzes the addition and repair of the essential 3'-terminal CCA sequence in tRNAs without using a nucleic acid template. Adds these three nucleotides in the order of C, C, and A to the tRNA nucleotide-73, using CTP and ATP as substrates and producing inorganic pyrophosphate. tRNA 3'-terminal CCA addition is required both for tRNA processing and repair. Also involved in tRNA surveillance by mediating tandem CCA addition to generate a CCACCA at the 3' terminus of unstable tRNAs. While stable tRNAs receive only 3'-terminal CCA, unstable tRNAs are marked with CCACCA and rapidly degraded. The protein is Multifunctional CCA protein of Acidovorax sp. (strain JS42).